The following is a 273-amino-acid chain: Rhamnulose-1-phosphate aldolase (273 aa).

E117 is a catalytic residue. 3 residues coordinate Zn(2+): H140, H142, and H211.

The protein belongs to the aldolase class II family. RhaD subfamily. Zn(2+) is required as a cofactor.

The protein localises to the cytoplasm. The enzyme catalyses L-rhamnulose 1-phosphate = (S)-lactaldehyde + dihydroxyacetone phosphate. It functions in the pathway carbohydrate degradation; L-rhamnose degradation; glycerone phosphate from L-rhamnose: step 3/3. Functionally, catalyzes the reversible cleavage of L-rhamnulose-1-phosphate to dihydroxyacetone phosphate (DHAP) and L-lactaldehyde. This Listeria monocytogenes serotype 4b (strain F2365) protein is Rhamnulose-1-phosphate aldolase.